The primary structure comprises 391 residues: 3-ketoacyl-CoA thiolase, peroxisomal (391 aa).

Cys92 functions as the Acyl-thioester intermediate in the catalytic mechanism. Residues His335 and Cys366 each act as proton acceptor in the active site.

It belongs to the thiolase-like superfamily. Thiolase family. In terms of assembly, homodimer.

The protein resides in the peroxisome. It catalyses the reaction an acyl-CoA + acetyl-CoA = a 3-oxoacyl-CoA + CoA. It functions in the pathway lipid metabolism; fatty acid metabolism. The sequence is that of 3-ketoacyl-CoA thiolase, peroxisomal (FOX3) from Encephalitozoon cuniculi (strain GB-M1) (Microsporidian parasite).